The primary structure comprises 310 residues: Tryptophan 2,3-dioxygenase (310 aa).

Residues 1-39 form a disordered region; sequence MQPPGNDAPAGCPFSGARAQGTQAAHEAPHVPGDAGEQA. Substrate is bound by residues 79-83, Tyr141, and Arg145; that span reads FIIQH. Position 268 (His268) interacts with heme. Substrate is bound at residue Thr282.

It belongs to the tryptophan 2,3-dioxygenase family. In terms of assembly, homotetramer. Requires heme as cofactor.

The enzyme catalyses L-tryptophan + O2 = N-formyl-L-kynurenine. It functions in the pathway amino-acid degradation; L-tryptophan degradation via kynurenine pathway; L-kynurenine from L-tryptophan: step 1/2. In terms of biological role, heme-dependent dioxygenase that catalyzes the oxidative cleavage of the L-tryptophan (L-Trp) pyrrole ring and converts L-tryptophan to N-formyl-L-kynurenine. Catalyzes the oxidative cleavage of the indole moiety. The polypeptide is Tryptophan 2,3-dioxygenase (Burkholderia multivorans (strain ATCC 17616 / 249)).